A 466-amino-acid chain; its full sequence is Cysteine--tRNA ligase (466 aa).

Cysteine 33 contacts Zn(2+). Residues 35 to 45 carry the 'HIGH' region motif; that stretch reads PTVYDYAHIGN. Zn(2+) is bound by residues cysteine 221, histidine 246, and glutamate 250. Residues 279 to 283 carry the 'KMSKS' region motif; it reads KMSKS. Lysine 282 lines the ATP pocket.

Belongs to the class-I aminoacyl-tRNA synthetase family. Monomer. It depends on Zn(2+) as a cofactor.

The protein resides in the cytoplasm. It carries out the reaction tRNA(Cys) + L-cysteine + ATP = L-cysteinyl-tRNA(Cys) + AMP + diphosphate. This is Cysteine--tRNA ligase from Rhizobium meliloti (strain 1021) (Ensifer meliloti).